The following is a 458-amino-acid chain: MHPKLDILILAAGKGTRMRSDLPKVLHQLAGRPLLGHVVATAQALGAARTCVVYGFGGEAVPQAMAEATLSFVLQAEQHGTGHAVKQALPQLADDGVTLVLYGDVPLIHTTTLAPLAAAADAGKFGLLTVNLAHPDGYGRIVRENARVARIVEHKDASAAERAIQEVNTGILAVPTRHLKRWIGELRNDNAQGEYYLTDIVALAVRDGVEIETHQPQHDWEVLGVNSKAQLAELERIHQNEVAQRLLADGVTLMDPARLDVRGSLVCGRDVTIDVNCVFEGRVELGDGVQIGANCVLRNVSIAAGTRLDAFTLIDDATIGEAGRLGPFSRIRPGTRLARDVHVGNFVEIKNSAIDAGSKINHLSYVGDTTMGQRVNIGAGTITCNYDGANKHRTVIEDDVFVGSDTQLVAPVTVGQGATLGAGTTLTRDAPPGELTLSRAKQQTISGWKRPIKPKKEG.

Positions 1-228 (MHPKLDILIL…DWEVLGVNSK (228 aa)) are pyrophosphorylase. UDP-N-acetyl-alpha-D-glucosamine is bound by residues 10–13 (LAAG), K24, Q75, 80–81 (GT), 102–104 (YGD), G139, E153, N168, and N226. D104 is a binding site for Mg(2+). Residue N226 coordinates Mg(2+). A linker region spans residues 229–249 (AQLAELERIHQNEVAQRLLAD). Positions 250-458 (GVTLMDPARL…KRPIKPKKEG (209 aa)) are N-acetyltransferase. The UDP-N-acetyl-alpha-D-glucosamine site is built by R332 and K350. H362 (proton acceptor) is an active-site residue. The UDP-N-acetyl-alpha-D-glucosamine site is built by Y365 and N376. Residues A379, 385–386 (NY), S404, A422, and R439 each bind acetyl-CoA.

This sequence in the N-terminal section; belongs to the N-acetylglucosamine-1-phosphate uridyltransferase family. In the C-terminal section; belongs to the transferase hexapeptide repeat family. In terms of assembly, homotrimer. Requires Mg(2+) as cofactor.

The protein resides in the cytoplasm. It catalyses the reaction alpha-D-glucosamine 1-phosphate + acetyl-CoA = N-acetyl-alpha-D-glucosamine 1-phosphate + CoA + H(+). It carries out the reaction N-acetyl-alpha-D-glucosamine 1-phosphate + UTP + H(+) = UDP-N-acetyl-alpha-D-glucosamine + diphosphate. The protein operates within nucleotide-sugar biosynthesis; UDP-N-acetyl-alpha-D-glucosamine biosynthesis; N-acetyl-alpha-D-glucosamine 1-phosphate from alpha-D-glucosamine 6-phosphate (route II): step 2/2. It functions in the pathway nucleotide-sugar biosynthesis; UDP-N-acetyl-alpha-D-glucosamine biosynthesis; UDP-N-acetyl-alpha-D-glucosamine from N-acetyl-alpha-D-glucosamine 1-phosphate: step 1/1. Its pathway is bacterial outer membrane biogenesis; LPS lipid A biosynthesis. Its function is as follows. Catalyzes the last two sequential reactions in the de novo biosynthetic pathway for UDP-N-acetylglucosamine (UDP-GlcNAc). The C-terminal domain catalyzes the transfer of acetyl group from acetyl coenzyme A to glucosamine-1-phosphate (GlcN-1-P) to produce N-acetylglucosamine-1-phosphate (GlcNAc-1-P), which is converted into UDP-GlcNAc by the transfer of uridine 5-monophosphate (from uridine 5-triphosphate), a reaction catalyzed by the N-terminal domain. In Thiobacillus denitrificans (strain ATCC 25259 / T1), this protein is Bifunctional protein GlmU.